Here is a 271-residue protein sequence, read N- to C-terminus: Isoprenyl transferase (271 aa).

The active site involves D35. D35 is a Mg(2+) binding site. Substrate is bound by residues G36–R39, W40, R48, H52, and S80–E82. The active-site Proton acceptor is N83. Residues W84, R86, R207, and R213 to S215 each bind substrate. E226 is a Mg(2+) binding site.

This sequence belongs to the UPP synthase family. As to quaternary structure, homodimer. Mg(2+) is required as a cofactor.

Its function is as follows. Catalyzes the condensation of isopentenyl diphosphate (IPP) with allylic pyrophosphates generating different type of terpenoids. This chain is Isoprenyl transferase, found in Enterococcus faecalis (strain ATCC 700802 / V583).